Here is a 214-residue protein sequence, read N- to C-terminus: Cytochrome b (214 aa).

Helical transmembrane passes span F31–I51, W75–I96, W111–L131, and F176–L196. Residues H81 and H95 each coordinate heme b. Heme b-binding residues include H180 and H194. H199 is an a ubiquinone binding site.

Belongs to the cytochrome b family. The cytochrome bc1 complex contains 3 respiratory subunits (MT-CYB, CYC1 and UQCRFS1), 2 core proteins (UQCRC1 and UQCRC2) and probably 6 low-molecular weight proteins. The cofactor is heme b.

The protein resides in the mitochondrion inner membrane. Component of the ubiquinol-cytochrome c reductase complex (complex III or cytochrome b-c1 complex) that is part of the mitochondrial respiratory chain. The b-c1 complex mediates electron transfer from ubiquinol to cytochrome c. Contributes to the generation of a proton gradient across the mitochondrial membrane that is then used for ATP synthesis. This Agkistrodon contortrix contortrix (Southern copperhead) protein is Cytochrome b (MT-CYB).